The primary structure comprises 281 residues: MERAGICHSDGFDLAYRIEGEGAPILVIGSAVYYPRLFSSDIKQKYQWVFVDHRGFAKPKRELRAEDSRLDAVLADIERMRTFLQLEDVTILGHSGHAFMALEYARTYPKQVRKVALFNTAPDNSEERQRKSESFFMETASLERKKRFEKDIENLPQDIDKDPERRFVHMCIRAEAKSFYQERPHAAALWDGVFTNMPIIDELWGNTFARIDLLQRLADVRMPVYIGLGRYDYLVAPVSLWDAVDGLYPHVDKVIFEKSGHQPMLEEPEAFDQSFRKWLDQ.

In terms of domain architecture, AB hydrolase-1 spans 30-268 (SAVYYPRLFS…SGHQPMLEEP (239 aa)). Catalysis depends on Ser-95, which acts as the Nucleophile. Asp-232 is an active-site residue. His-261 functions as the Proton donor in the catalytic mechanism.

The protein belongs to the AB hydrolase superfamily.

The polypeptide is AB hydrolase superfamily protein YclE (yclE) (Bacillus subtilis (strain 168)).